Consider the following 2542-residue polypeptide: Ankyrin repeat and KH domain-containing protein 1 (2542 aa).

Position 1 is an N-acetylmethionine (Met1). Gly residues predominate over residues 1–10 (MLTDSGGGGT). 2 disordered regions span residues 1–44 (MLTD…IRTV) and 50–69 (AGPA…SGTG). Low complexity predominate over residues 20-29 (APRSAPAGAS). Residues 57–69 (GSSGGGGSGSGTG) are compositionally biased toward gly residues. A phosphoserine mark is found at Ser101 and Ser105. ANK repeat units lie at residues 204–233 (VDTR…SVNE), 237–266 (EGES…NVED), 271–300 (GDIT…DVNS), 304–333 (TGNT…NIED), 337–366 (NGHT…GINT), 371–400 (FKES…DQEH), 404–433 (EMHT…QVNM), 437–466 (SFES…NLEE), 470–499 (EGYT…NINA), 504–533 (TQET…DIEL), 534–563 (GCST…NVHA), 567–596 (TGDT…DLEH), 600–629 (GGRT…NVNR), 634–663 (NDHT…DPTH), and 667–696 (DGST…NVLS). Positions 775–852 (LECIVEETEG…RQLQMKTQQQ (78 aa)) form a coiled coil. Residue Ser803 is modified to Phosphoserine. ANK repeat units lie at residues 1054 to 1083 (NHDT…KIEH), 1087 to 1116 (KGFT…DIEA), 1121 to 1150 (TKDT…NKEH), 1154 to 1183 (SDYT…EINS), 1189 to 1218 (LGIS…DINA), 1223 to 1252 (NRNT…NVEH), 1256 to 1285 (TGLT…DVNA), 1291 to 1320 (SRDT…HIDV), 1324 to 1353 (KGNT…DVDA), and 1357 to 1386 (RKIT…QFPS). The stretch at 1415–1485 (KAKDQQAAEA…ENKPKENSEL (71 aa)) forms a coiled coil. 3 disordered regions span residues 1441 to 1517 (REES…TIGI), 1534 to 1614 (NVVT…SQEL), and 1632 to 1664 (SQEE…YKTV). Residues 1453 to 1463 (REKRKEKRKKK) are compositionally biased toward basic residues. The segment covering 1464–1483 (KEEQKRKQEEDEENKPKENS) has biased composition (basic and acidic residues). Positions 1484-1502 (ELPEDEDEEENDEDVEQEV) are enriched in acidic residues. Low complexity predominate over residues 1503-1517 (PIEPPSATTTTTIGI). The residue at position 1540 (Ser1540) is a Phosphoserine. Residue Thr1553 is modified to Phosphothreonine. Residues 1590 to 1603 (NSDSDNLDSTDCNS) show a composition bias toward low complexity. A compositionally biased stretch (polar residues) spans 1604 to 1614 (ESSSGGKSQEL). Phosphoserine is present on Ser1632. The span at 1638–1664 (STATSKTQTRLEGEVTPNSLSTSYKTV) shows a compositional bias: polar residues. Thr1653 bears the Phosphothreonine mark. Positions 1695 to 1759 (RRSKKLSVPA…ESTRYAVQLI (65 aa)) constitute a KH domain. Disordered stretches follow at residues 1886–1923 (NTWG…VLPS), 1987–2106 (PSVS…APLT), and 2260–2367 (NMHP…IPPP). The segment covering 1898–1922 (PGNTNSSPKHNNTSRLPNQNGTVLP) has biased composition (polar residues). Residues 1987 to 1996 (PSVSSAPITS) show a composition bias toward low complexity. Positions 1997 to 2019 (GQAPTTFLPASTSQAQLSSQKME) are enriched in polar residues. A compositionally biased stretch (low complexity) spans 2042–2077 (CTPSSTANSCSSSASNTPGAPETHPSSSPTPTSSNT). Residues 2078 to 2106 (QEEAQPSSVSDLSPMSMPFASNSEPAPLT) show a composition bias toward polar residues. Composition is skewed to low complexity over residues 2285 to 2308 (LPSI…FSGI) and 2337 to 2349 (TSAS…APPT).

Belongs to the mask family. Interacts with PTPN11. Isoform 2 interacts with HIV-1 VPR. Interacts with NOD2. In terms of tissue distribution, ubiquitous with high expression in cervix, spleen and brain. Expressed in hematopoietic cells with increased expression in leukemia cells. Isoform 2 is highly expressed in spleen with almost no expression in muscle and brain.

Its subcellular location is the cytoplasm. Functionally, may play a role as a scaffolding protein that may be associated with the abnormal phenotype of leukemia cells. Isoform 2 may possess an antiapoptotic effect and protect cells during normal cell survival through its regulation of caspases. The sequence is that of Ankyrin repeat and KH domain-containing protein 1 (ANKHD1) from Homo sapiens (Human).